The primary structure comprises 467 residues: Methylenetetrahydrofolate--tRNA-(uracil-5-)-methyltransferase TrmFO (467 aa).

Position 11-16 (11-16) interacts with FAD; the sequence is GAGLAG.

Belongs to the MnmG family. TrmFO subfamily. FAD is required as a cofactor.

Its subcellular location is the cytoplasm. The catalysed reaction is uridine(54) in tRNA + (6R)-5,10-methylene-5,6,7,8-tetrahydrofolate + NADH + H(+) = 5-methyluridine(54) in tRNA + (6S)-5,6,7,8-tetrahydrofolate + NAD(+). It catalyses the reaction uridine(54) in tRNA + (6R)-5,10-methylene-5,6,7,8-tetrahydrofolate + NADPH + H(+) = 5-methyluridine(54) in tRNA + (6S)-5,6,7,8-tetrahydrofolate + NADP(+). Functionally, catalyzes the folate-dependent formation of 5-methyl-uridine at position 54 (M-5-U54) in all tRNAs. This chain is Methylenetetrahydrofolate--tRNA-(uracil-5-)-methyltransferase TrmFO, found in Prochlorococcus marinus (strain MIT 9303).